The following is a 141-amino-acid chain: Sporulation-specific cell division protein SsgB (141 aa).

The protein belongs to the SsgA family. Interacts with SsgA. Interacts with FtsZ (via N-terminus).

It localises to the cell septum. Functionally, involved in sporulation-specific cell division. Required for early stages of sporulation. Important in the process of growth cessation prior to sporulation-specific cell division. Recruits cell division protein FtsZ to the future septum sites and tethers the contractile ring structure (Z ring) to the cytoplasmic membrane during sporulation. Stimulates polymerization and filament length of FtsZ in vitro. In Saccharopolyspora erythraea (strain ATCC 11635 / DSM 40517 / JCM 4748 / NBRC 13426 / NCIMB 8594 / NRRL 2338), this protein is Sporulation-specific cell division protein SsgB.